The primary structure comprises 215 residues: LexA repressor (215 aa).

A DNA-binding region (H-T-H motif) is located at residues R28–R48. Catalysis depends on for autocatalytic cleavage activity residues S133 and K170.

This sequence belongs to the peptidase S24 family. Homodimer.

It carries out the reaction Hydrolysis of Ala-|-Gly bond in repressor LexA.. In terms of biological role, represses a number of genes involved in the response to DNA damage (SOS response), including recA and lexA. In the presence of single-stranded DNA, RecA interacts with LexA causing an autocatalytic cleavage which disrupts the DNA-binding part of LexA, leading to derepression of the SOS regulon and eventually DNA repair. This chain is LexA repressor, found in Burkholderia vietnamiensis (strain G4 / LMG 22486) (Burkholderia cepacia (strain R1808)).